The primary structure comprises 791 residues: Vezatin (791 aa).

The next 2 membrane-spanning stretches (helical) occupy residues isoleucine 138 to alanine 158 and serine 163 to leucine 183. Residues valine 435–glutamate 464 are a coiled coil. Residues glycine 752–tyrosine 769 are compositionally biased toward acidic residues. The tract at residues glycine 752–glutamate 791 is disordered. Residues lysine 773–asparagine 783 show a composition bias toward basic and acidic residues.

The protein belongs to the vezatin family. As to quaternary structure, interacts with myosin VIIa and the cadherin-catenins complex.

Its subcellular location is the cell membrane. It is found in the cell junction. It localises to the adherens junction. The protein localises to the nucleus. In terms of biological role, plays a pivotal role in the establishment of adherens junctions and their maintenance in adult life. The chain is Vezatin (vezt) from Xenopus tropicalis (Western clawed frog).